The following is a 143-amino-acid chain: Transcriptional regulator MraZ (143 aa).

2 SpoVT-AbrB domains span residues 5–47 (EYDH…TLDE) and 76–119 (AVEV…DRET).

The protein belongs to the MraZ family. As to quaternary structure, forms oligomers.

The protein localises to the cytoplasm. It localises to the nucleoid. The sequence is that of Transcriptional regulator MraZ from Staphylococcus aureus (strain Mu3 / ATCC 700698).